We begin with the raw amino-acid sequence, 100 residues long: NADH-quinone oxidoreductase subunit K (100 aa).

The next 3 membrane-spanning stretches (helical) occupy residues isoleucine 2–valine 22, leucine 28–valine 48, and valine 60–leucine 80.

This sequence belongs to the complex I subunit 4L family. As to quaternary structure, NDH-1 is composed of 13 different subunits. Subunits NuoA, H, J, K, L, M, N constitute the membrane sector of the complex.

The protein localises to the cell inner membrane. The enzyme catalyses a quinone + NADH + 5 H(+)(in) = a quinol + NAD(+) + 4 H(+)(out). NDH-1 shuttles electrons from NADH, via FMN and iron-sulfur (Fe-S) centers, to quinones in the respiratory chain. The immediate electron acceptor for the enzyme in this species is believed to be ubiquinone. Couples the redox reaction to proton translocation (for every two electrons transferred, four hydrogen ions are translocated across the cytoplasmic membrane), and thus conserves the redox energy in a proton gradient. The polypeptide is NADH-quinone oxidoreductase subunit K (Erwinia tasmaniensis (strain DSM 17950 / CFBP 7177 / CIP 109463 / NCPPB 4357 / Et1/99)).